Reading from the N-terminus, the 375-residue chain is Growth/differentiation factor 8 (375 aa).

An N-terminal signal peptide occupies residues 1–23 (MQKLQLCVYIYLFMLIVAGPVDL). A propeptide spanning residues 24-266 (NENSEQKENV…VTDTPKRSRR (243 aa)) is cleaved from the precursor. Asn-71 carries an N-linked (GlcNAc...) asparagine glycan. Disulfide bonds link Cys-272-Cys-282, Cys-281-Cys-340, Cys-309-Cys-372, and Cys-313-Cys-374.

Belongs to the TGF-beta family. Homodimer; disulfide-linked. Interacts with WFIKKN2, leading to inhibit its activity. Interacts with FST3. In terms of processing, synthesized as large precursor molecule that undergoes proteolytic cleavage to generate an N-terminal propeptide and a disulfide linked C-terminal dimer, which is the biologically active molecule. The circulating form consists of a latent complex of the C-terminal dimer and other proteins, including its propeptide, which maintain the C-terminal dimer in a latent, inactive state. Ligand activation requires additional cleavage of the prodomain by a tolloid-like metalloproteinase.

The protein localises to the secreted. In terms of biological role, acts specifically as a negative regulator of skeletal muscle growth. The chain is Growth/differentiation factor 8 (MSTN) from Homo sapiens (Human).